The chain runs to 473 residues: ATP synthase subunit beta (473 aa).

153–160 (GGAGVGKT) provides a ligand contact to ATP.

The protein belongs to the ATPase alpha/beta chains family. In terms of assembly, F-type ATPases have 2 components, CF(1) - the catalytic core - and CF(0) - the membrane proton channel. CF(1) has five subunits: alpha(3), beta(3), gamma(1), delta(1), epsilon(1). CF(0) has three main subunits: a(1), b(2) and c(9-12). The alpha and beta chains form an alternating ring which encloses part of the gamma chain. CF(1) is attached to CF(0) by a central stalk formed by the gamma and epsilon chains, while a peripheral stalk is formed by the delta and b chains.

It is found in the cell membrane. It carries out the reaction ATP + H2O + 4 H(+)(in) = ADP + phosphate + 5 H(+)(out). Its function is as follows. Produces ATP from ADP in the presence of a proton gradient across the membrane. The catalytic sites are hosted primarily by the beta subunits. This Rickettsia africae (strain ESF-5) protein is ATP synthase subunit beta.